A 91-amino-acid polypeptide reads, in one-letter code: Small ribosomal subunit protein uS19 (91 aa).

It belongs to the universal ribosomal protein uS19 family.

In terms of biological role, protein S19 forms a complex with S13 that binds strongly to the 16S ribosomal RNA. This Acinetobacter baumannii (strain AB307-0294) protein is Small ribosomal subunit protein uS19.